Here is a 95-residue protein sequence, read N- to C-terminus: MKTLSVLVLCSLAVLCLTSDASFSSQPAVDTPAQEGLFVEQEQASSVVRQAPKELSLSQLESLREVCELNLACEDMMDTSGIIAAYTTYYGPIPF.

Positions 1–21 (MKTLSVLVLCSLAVLCLTSDA) are cleaved as a signal peptide. Residues 22-50 (SFSSQPAVDTPAQEGLFVEQEQASSVVRQ) constitute a propeptide that is removed on maturation. The Gla domain maps to 45–91 (SSVVRQAPKELSLSQLESLREVCELNLACEDMMDTSGIIAAYTTYYG). Glutamate 61, glutamate 65, and glutamate 68 together coordinate Ca(2+). 4-carboxyglutamate occurs at positions 61, 65, and 68. A disulfide bridge connects residues cysteine 67 and cysteine 73.

Belongs to the osteocalcin/matrix Gla protein family. Post-translationally, gamma-carboxyglutamate residues are formed by vitamin K dependent carboxylation by GGCX. These residues are essential for the binding of calcium.

Its subcellular location is the secreted. Its function is as follows. The carboxylated form is one of the main organic components of the bone matrix, which constitutes 1-2% of the total bone protein. The carboxylated form binds strongly to apatite and calcium. The chain is Osteocalcin 1 from Solea senegalensis (Senegalese sole).